Reading from the N-terminus, the 392-residue chain is Iron-sulfur cluster assembly SufBD family protein ML0594 (392 aa).

This sequence belongs to the iron-sulfur cluster assembly SufBD family.

In Mycobacterium leprae (strain TN), this protein is Iron-sulfur cluster assembly SufBD family protein ML0594.